The primary structure comprises 240 residues: Sec-independent protein translocase protein TatC (240 aa).

The next 6 membrane-spanning stretches (helical) occupy residues Ile-15 to Val-35, Leu-61 to Leu-81, Leu-103 to Leu-123, Phe-152 to Val-172, Phe-191 to Leu-211, and Met-212 to Arg-232.

This sequence belongs to the TatC family. In terms of assembly, forms a complex with TatA.

It is found in the cell inner membrane. Part of the twin-arginine translocation (Tat) system that transports large folded proteins containing a characteristic twin-arginine motif in their signal peptide across membranes. In Aquifex aeolicus (strain VF5), this protein is Sec-independent protein translocase protein TatC.